A 312-amino-acid polypeptide reads, in one-letter code: MSAFSEAALEKKLSELSNSQQSVQTLSLWLIHHRKHSRPIVTVWERELRKAKPNRKLTFLYLANDVIQNSKRKGPEFTKDFAPVIVEAFKHVSSETDESCKKHLGRVLSIWEERSVYENDVLEQLKQALYGDKKPRKRTYEQIKVDENENCSSLGSPSEPPQTLDLVRALQDLENAASGDAAVHQRIASLPVEVQEVSLLDKITDKESGERLSKMVEDACMLLADYNGRLAAEIDDRKQLTRMLADFLRCQKEALAEKEHKLEEYKRKLARVSLVRKELRSRIQSLPDLSRLPNVTGSHMHLPFAGDIYSED.

Ser-2 is subject to N-acetylserine. The 132-residue stretch at 2–133 (SAFSEAALEK…QLKQALYGDK (132 aa)) folds into the CID domain. Phosphoserine occurs at positions 153, 156, and 285. A coiled-coil region spans residues 244–286 (LADFLRCQKEALAEKEHKLEEYKRKLARVSLVRKELRSRIQSL).

It belongs to the UPF0400 (RTT103) family. As to quaternary structure, may form a heterodimer with RPRD1B. Associates with the RNA polymerase II subunit POLR2A (via CTD phosphorylated at 'Ser-2' and 'Ser-7' of the heptad repeats).

The protein resides in the nucleus. In terms of biological role, interacts with phosphorylated C-terminal heptapeptide repeat domain (CTD) of the largest RNA polymerase II subunit POLR2A, and participates in dephosphorylation of the CTD by RPAP2. May act as a negative regulator of cyclin-D1 (CCND1) and cyclin-E (CCNE1) in the cell cycle. The polypeptide is Regulation of nuclear pre-mRNA domain-containing protein 1A (RPRD1A) (Pongo abelii (Sumatran orangutan)).